The primary structure comprises 600 residues: Protein GPR107 (600 aa).

The N-terminal stretch at 1–39 (MAALAPVGSPASRGPRLAAGLRLLPMLGLLQLLAEPGLG) is a signal peptide. The Extracellular segment spans residues 40–263 (RVHHLALKDD…YLSAGEIPLP (224 aa)). N-linked (GlcNAc...) asparagine glycans are attached at residues asparagine 70 and asparagine 169. A disulfide bridge connects residues cysteine 109 and cysteine 228. Residues 157 to 175 (SQEPNVNPASAGNQTQKTQ) are compositionally biased toward polar residues. The tract at residues 157–185 (SQEPNVNPASAGNQTQKTQDGGKSKRSTV) is disordered. Residues 176-185 (DGGKSKRSTV) show a composition bias toward basic and acidic residues. N-linked (GlcNAc...) asparagine glycosylation is present at asparagine 211. The chain crosses the membrane as a helical span at residues 264-284 (KLYISMAFFFFLSGTIWIHIL). The Cytoplasmic segment spans residues 285–293 (RKRRNDVFK). The chain crosses the membrane as a helical span at residues 294 to 314 (IHWLMAALPFTKSLSLVFHAI). At 315–337 (DYHYISSQGFPIEGWAVVYYITH) the chain is on the extracellular side. The helical transmembrane segment at 338–358 (LLKGALLFITIALIGTGWAFI) threads the bilayer. The Cytoplasmic segment spans residues 359–368 (KHILSDKDKK). The chain crosses the membrane as a helical span at residues 369–389 (IFMIVIPLQVLANVAYIIIES). Residues 390–402 (TEEGTTEYGLWKD) are Extracellular-facing. The helical transmembrane segment at 403–423 (SLFLVDLLCCGAILFPVVWSI) threads the bilayer. At 424 to 498 (RHLQEASATD…AKLKLFRHYY (75 aa)) the chain is on the cytoplasmic side. Residues 499 to 519 (VLIVCYIYFTRIIAFLLKLAV) traverse the membrane as a helical segment. The Extracellular segment spans residues 520 to 524 (PFQWK). Residues 525 to 544 (WLYQLLDETATLVFFVLTGY) form a helical membrane-spanning segment. Over 545–600 (KFRPASDNPYLQLSQEEEDLEMESVVTTSGVMESMKKVKKVTNGSVEPQGEWEGAV) the chain is Cytoplasmic.

Belongs to the LU7TM family. In terms of processing, cleaved by FURIN to yield two fragments of 17 and 35 kDa that remain associated via a disulfide bond.

It is found in the cell membrane. It localises to the golgi apparatus. Its subcellular location is the trans-Golgi network membrane. In terms of biological role, has been proposed to act as a receptor for neuronostatin, a peptide derived from the somatostatin/SST precursor. Involved in blood sugar regulation through the induction of glucagon in response to low glucose. (Microbial infection) Required for intoxication by Pseudomonas aeruginosa exotoxin A and Campylobacter jejuni CDT. May contribute to the retrograde transport of bacterial toxins, including cholera toxin, from the trans-Golgi network to the endoplasmic reticulum. The chain is Protein GPR107 (GPR107) from Homo sapiens (Human).